The sequence spans 92 residues: Small ribosomal subunit protein uS19c (92 aa).

Belongs to the universal ribosomal protein uS19 family.

The protein localises to the plastid. The protein resides in the chloroplast. In terms of biological role, protein S19 forms a complex with S13 that binds strongly to the 16S ribosomal RNA. This Populus alba (White poplar) protein is Small ribosomal subunit protein uS19c.